Reading from the N-terminus, the 242-residue chain is Ubiquinone biosynthesis O-methyltransferase (242 aa).

The S-adenosyl-L-methionine site is built by Arg-36, Gly-56, Asp-77, and Met-130.

This sequence belongs to the methyltransferase superfamily. UbiG/COQ3 family.

It carries out the reaction a 3-demethylubiquinol + S-adenosyl-L-methionine = a ubiquinol + S-adenosyl-L-homocysteine + H(+). The catalysed reaction is a 3-(all-trans-polyprenyl)benzene-1,2-diol + S-adenosyl-L-methionine = a 2-methoxy-6-(all-trans-polyprenyl)phenol + S-adenosyl-L-homocysteine + H(+). The protein operates within cofactor biosynthesis; ubiquinone biosynthesis. O-methyltransferase that catalyzes the 2 O-methylation steps in the ubiquinone biosynthetic pathway. The chain is Ubiquinone biosynthesis O-methyltransferase from Pasteurella multocida (strain Pm70).